We begin with the raw amino-acid sequence, 69 residues long: Small ribosomal subunit protein bS21 (69 aa).

The segment at 50–69 is disordered; that stretch reads KAFKRKQAKKVRKLKQKTNR.

Belongs to the bacterial ribosomal protein bS21 family.

This is Small ribosomal subunit protein bS21 from Borrelia garinii subsp. bavariensis (strain ATCC BAA-2496 / DSM 23469 / PBi) (Borreliella bavariensis).